The sequence spans 290 residues: Poly-beta-1,6-N-acetyl-D-glucosamine N-deacetylase (290 aa).

The N-terminal stretch at 1–28 (MKYRKLIILVLSILIILPVSTLDGHHIA) is a signal peptide. The NodB homology domain maps to 114–290 (RSVWINFDDM…KRWDGFHEKD (177 aa)).

This sequence belongs to the polysaccharide deacetylase family.

Its subcellular location is the secreted. It is found in the cell wall. Functionally, catalyzes the N-deacetylation of poly-beta-1,6-N-acetyl-D-glucosamine (PNAG, also referred to as PIA), a biofilm adhesin polysaccharide. N-deacetylation is crucial for attachment of the polysaccharide to the bacterial cell surface; it leads to the introduction of positive charges in the otherwise neutral PIA polymer, allowing electrostatic interactions. The chain is Poly-beta-1,6-N-acetyl-D-glucosamine N-deacetylase (icaB) from Staphylococcus aureus (strain MRSA252).